We begin with the raw amino-acid sequence, 375 residues long: Tyrosine--tRNA ligase (375 aa).

Residues Y37, Y168, Q172, D175, and Q190 each coordinate L-tyrosine. The 'KMSKS' region signature appears at 251–255 (KMSKS). An ATP-binding site is contributed by K254.

It belongs to the class-I aminoacyl-tRNA synthetase family. TyrS type 4 subfamily. In terms of assembly, homodimer.

Its subcellular location is the cytoplasm. The catalysed reaction is tRNA(Tyr) + L-tyrosine + ATP = L-tyrosyl-tRNA(Tyr) + AMP + diphosphate + H(+). Catalyzes the attachment of tyrosine to tRNA(Tyr) in a two-step reaction: tyrosine is first activated by ATP to form Tyr-AMP and then transferred to the acceptor end of tRNA(Tyr). This is Tyrosine--tRNA ligase from Thermococcus gammatolerans (strain DSM 15229 / JCM 11827 / EJ3).